The sequence spans 458 residues: tRNA modification GTPase MnmE (458 aa).

Residues Arg-26, Glu-88, and Arg-127 each contribute to the (6S)-5-formyl-5,6,7,8-tetrahydrofolate site. The TrmE-type G domain occupies 224-378; it reads GLSTAIIGRP…IEDRINQLFF (155 aa). Asn-234 contacts K(+). GTP-binding positions include 234–239, 253–259, and 278–281; these read NVGKSS, TDIAGTT, and DTAG. Position 238 (Ser-238) interacts with Mg(2+). Residues Thr-253, Ile-255, and Thr-258 each contribute to the K(+) site. A Mg(2+)-binding site is contributed by Thr-259. Residue Lys-458 coordinates (6S)-5-formyl-5,6,7,8-tetrahydrofolate.

The protein belongs to the TRAFAC class TrmE-Era-EngA-EngB-Septin-like GTPase superfamily. TrmE GTPase family. In terms of assembly, homodimer. Heterotetramer of two MnmE and two MnmG subunits. K(+) is required as a cofactor.

It localises to the cytoplasm. Its function is as follows. Exhibits a very high intrinsic GTPase hydrolysis rate. Involved in the addition of a carboxymethylaminomethyl (cmnm) group at the wobble position (U34) of certain tRNAs, forming tRNA-cmnm(5)s(2)U34. The protein is tRNA modification GTPase MnmE of Streptococcus pyogenes serotype M18 (strain MGAS8232).